The primary structure comprises 393 residues: Arrestin-C (393 aa).

The span at 371-386 (FARQEDGGEEKQKALA) shows a compositional bias: basic and acidic residues. Positions 371–393 (FARQEDGGEEKQKALAEEGDEGS) are disordered.

The protein belongs to the arrestin family. Homodimer; disulfide-linked in response to retinal illumination. Interacts with CXCR4; the interaction is dependent on the C-terminal phosphorylation of CXCR4 and modulates the calcium ion mobilization activity of CXCR4.

The protein localises to the photoreceptor inner segment. The protein resides in the cell projection. It is found in the cilium. Its subcellular location is the photoreceptor outer segment. May play a role in an as yet undefined retina-specific signal transduction. Could bind to photoactivated-phosphorylated red/green opsins. This is Arrestin-C (ARR3) from Ictidomys tridecemlineatus (Thirteen-lined ground squirrel).